Consider the following 102-residue polypeptide: Putative pterin-4-alpha-carbinolamine dehydratase (102 aa).

The protein belongs to the pterin-4-alpha-carbinolamine dehydratase family.

The catalysed reaction is (4aS,6R)-4a-hydroxy-L-erythro-5,6,7,8-tetrahydrobiopterin = (6R)-L-erythro-6,7-dihydrobiopterin + H2O. The sequence is that of Putative pterin-4-alpha-carbinolamine dehydratase from Burkholderia orbicola (strain MC0-3).